The following is a 515-amino-acid chain: uncharacterized protein (515 aa).

This sequence belongs to the AllF family.

This is an uncharacterized protein from Escherichia coli (strain K12).